A 337-amino-acid chain; its full sequence is Anaerobic sulfite reductase subunit C (337 aa).

Residues C115, C121, C153, C157, C180, C183, C186, C190, C212, C215, C218, and C222 each coordinate [4Fe-4S] cluster. Residue C157 coordinates siroheme. 4Fe-4S ferredoxin-type domains lie at 171–200 and 203–232; these read AKMRFTADRCIGCGACVKACSHHAVGCLAL and GKAVKEESACIGCGECVLACPTLAWQRKPD.

The protein belongs to the nitrite and sulfite reductase 4Fe-4S domain family. In terms of assembly, the anaerobic sulfite reductase seems to consist of three subunits. [4Fe-4S] cluster serves as cofactor. It depends on siroheme as a cofactor.

It localises to the cytoplasm. It carries out the reaction hydrogen sulfide + 3 NAD(+) + 3 H2O = sulfite + 3 NADH + 4 H(+). It functions in the pathway sulfur metabolism; sulfite reduction. In terms of biological role, this enzyme catalyzes the hydrogen sulfide production from sulfite. It is strictly anaerobic. It is regulated by electron acceptors rather than by cysteine. This Salmonella typhi protein is Anaerobic sulfite reductase subunit C (asrC).